The sequence spans 181 residues: Probable pyruvoyl-dependent arginine decarboxylase (181 aa).

The residue at position 43 (Ser-43) is a Pyruvic acid (Ser).

The protein belongs to the PdaD family. Requires pyruvate as cofactor.

It carries out the reaction L-arginine + H(+) = agmatine + CO2. The sequence is that of Probable pyruvoyl-dependent arginine decarboxylase from Chlorobaculum tepidum (strain ATCC 49652 / DSM 12025 / NBRC 103806 / TLS) (Chlorobium tepidum).